We begin with the raw amino-acid sequence, 377 residues long: Formate dehydrogenase, mitochondrial (377 aa).

The transit peptide at 1 to 29 (MAAMWRAAARQLVDRAVGSRAAHTSAGSK) directs the protein to the mitochondrion. Residues isoleucine 121 and asparagine 145 each coordinate substrate. NAD(+)-binding positions include threonine 146, aspartate 220, 255–259 (PLTEK), asparagine 281, aspartate 307, and 331–334 (HISG).

It belongs to the D-isomer specific 2-hydroxyacid dehydrogenase family. FDH subfamily. Homodimer.

It is found in the mitochondrion. The catalysed reaction is formate + NAD(+) = CO2 + NADH. Functionally, catalyzes the NAD(+)-dependent oxidation of formate to carbon dioxide. Involved in the cell stress response. The polypeptide is Formate dehydrogenase, mitochondrial (Hordeum vulgare (Barley)).